A 240-amino-acid chain; its full sequence is Probable transcriptional regulatory protein MXAN_7062 (240 aa).

It belongs to the TACO1 family.

The protein localises to the cytoplasm. This is Probable transcriptional regulatory protein MXAN_7062 from Myxococcus xanthus (strain DK1622).